The chain runs to 187 residues: Late expression factor 11 (187 aa).

Disordered regions lie at residues 1–24 (MAPAVVGASQLRGGDSPGPARNRD) and 119–187 (GDTK…QSQQ).

It belongs to the baculoviridae LEF-11 family.

Functionally, involved in late/very late gene activation. The sequence is that of Late expression factor 11 (LEF-11) from Lymantria dispar multicapsid nuclear polyhedrosis virus (LdMNPV).